The following is a 78-amino-acid chain: Major outer membrane lipoprotein Lpp 1 (78 aa).

A signal peptide spans 1–20 (MNRTKLVLGAVILGSTLLAG). Cys21 is lipidated: N-palmitoyl cysteine. The S-diacylglycerol cysteine moiety is linked to residue Cys21. 2 repeats span residues 24–34 (NAKIDQLSSDV) and 38–48 (NAKVDQLSNDV). Positions 27–75 (IDQLSSDVQTLNAKVDQLSNDVNAMRSDVQAAKDDAARANQRLDNQATK) form a coiled coil. Residues 56–78 (QAAKDDAARANQRLDNQATKYRK) form a disordered region. The segment covering 68–78 (RLDNQATKYRK) has biased composition (polar residues). Lys78 carries the post-translational modification N6-murein peptidoglycan lysine.

It belongs to the Lpp family. As to quaternary structure, homotrimer.

It is found in the cell outer membrane. It localises to the secreted. The protein resides in the cell wall. In terms of biological role, a highly abundant outer membrane lipoprotein that controls the distance between the inner and outer membranes. The only protein known to be covalently linked to the peptidoglycan network (PGN). Also non-covalently binds the PGN. The link between the cell outer membrane and PGN contributes to maintenance of the structural and functional integrity of the cell envelope, and maintains the correct distance between the PGN and the outer membrane. This chain is Major outer membrane lipoprotein Lpp 1, found in Salmonella paratyphi A (strain ATCC 9150 / SARB42).